Consider the following 325-residue polypeptide: Olfactory receptor 1S2 (325 aa).

The Extracellular segment spans residues 1–38 (MKTLCSFLQISRNMHQENQTTITEFILLGLSNQAEHQN). An N-linked (GlcNAc...) asparagine glycan is attached at asparagine 18. Residues 39-62 (LLFVLFLSMYVVTVVGNGLIIVAI) traverse the membrane as a helical segment. The Cytoplasmic segment spans residues 63-70 (SLDIYLHT). Residues 71 to 92 (PMYLFLAYLSFADISSISNSVP) form a helical membrane-spanning segment. Over 93-113 (KMLVNIQTNSQSISYESCITQ) the chain is Extracellular. Cysteine 110 and cysteine 202 are oxidised to a cystine. Residues 114–133 (MYFSIVFVVTDNLLLGTMAF) form a helical membrane-spanning segment. The Cytoplasmic portion of the chain corresponds to 134–152 (DHFVAICHPLNYTTFMRAR). Residues 153 to 171 (FGTLLTVISWFLSNIIALT) traverse the membrane as a helical segment. At 172–208 (HTLLLIQLLFCDHNTLPHFFCDLAPLLKLSCSDTMIN) the chain is on the extracellular side. Residues 209–232 (ELVLFIVGLSVIIFPFVLIFFSYV) form a helical membrane-spanning segment. Residues 233 to 249 (CIIRAVLGVSSTQGKWK) are Cytoplasmic-facing. A helical transmembrane segment spans residues 250 to 272 (AFSTCGSHLTIALLFYGTTVGVY). Residues 273 to 285 (FFPSSTHPEDTDK) lie on the Extracellular side of the membrane. Residues 286 to 305 (IGAVLFTVVTPMMNPFIYSL) traverse the membrane as a helical segment. The Cytoplasmic portion of the chain corresponds to 306 to 325 (RNKDMKGALRKLINRKISSL).

Belongs to the G-protein coupled receptor 1 family.

The protein resides in the cell membrane. Its function is as follows. Odorant receptor. In Homo sapiens (Human), this protein is Olfactory receptor 1S2 (OR1S2).